The chain runs to 1444 residues: DNA polymerase III PolC-type (1444 aa).

The region spanning 428–584 (YCVFDVETTG…FDAEATAYLA (157 aa)) is the Exonuclease domain.

This sequence belongs to the DNA polymerase type-C family. PolC subfamily.

It localises to the cytoplasm. The catalysed reaction is DNA(n) + a 2'-deoxyribonucleoside 5'-triphosphate = DNA(n+1) + diphosphate. Required for replicative DNA synthesis. This DNA polymerase also exhibits 3' to 5' exonuclease activity. In Listeria monocytogenes serovar 1/2a (strain ATCC BAA-679 / EGD-e), this protein is DNA polymerase III PolC-type.